Reading from the N-terminus, the 178-residue chain is Fibroin heavy chain (178 aa).

A signal peptide spans 1-21 (MRVKTFVILCCALQYVAYTNA). The segment at 149–178 (AVGAGAGAGAAAGSGAGAGAGYGAASGAGA) is highly repetitive.

In terms of assembly, silk fibroin elementary unit consists in a disulfide-linked heavy and light chain and a p25 glycoprotein in molar ratios of 6:6:1. This results in a complex of approximately 2.3 MDa. Post-translationally, the interchain disulfide bridge is essential for the intracellular transport and secretion of fibroin. As to expression, produced exclusively in the posterior (PSG) section of silk glands, which are essentially modified salivary glands.

Functionally, core component of the silk filament; a strong, insoluble and chemically inert fiber. This Bombyx mandarina (Wild silk moth) protein is Fibroin heavy chain (FIBH).